The primary structure comprises 292 residues: Shikimate dehydrogenase (NADP(+)) (292 aa).

Shikimate contacts are provided by residues 25 to 27 (SKS) and threonine 72. Lysine 76 (proton acceptor) is an active-site residue. Positions 97 and 113 each coordinate shikimate. Residues 137–141 (GAGGA), 161–166 (NRTQSK), and methionine 230 contribute to the NADP(+) site. Tyrosine 232 serves as a coordination point for shikimate. An NADP(+)-binding site is contributed by glycine 254.

It belongs to the shikimate dehydrogenase family. As to quaternary structure, homodimer.

The enzyme catalyses shikimate + NADP(+) = 3-dehydroshikimate + NADPH + H(+). It functions in the pathway metabolic intermediate biosynthesis; chorismate biosynthesis; chorismate from D-erythrose 4-phosphate and phosphoenolpyruvate: step 4/7. In terms of biological role, involved in the biosynthesis of the chorismate, which leads to the biosynthesis of aromatic amino acids. Catalyzes the reversible NADPH linked reduction of 3-dehydroshikimate (DHSA) to yield shikimate (SA). This Shewanella sp. (strain MR-4) protein is Shikimate dehydrogenase (NADP(+)).